A 405-amino-acid polypeptide reads, in one-letter code: L-cysteine:1D-myo-inositol 2-amino-2-deoxy-alpha-D-glucopyranoside ligase (405 aa).

Cys43 provides a ligand contact to Zn(2+). L-cysteinyl-5'-AMP is bound by residues 43-46 (CGIT), Thr58, and 81-83 (NIT). The short motif at 45–55 (ITPYDATHLGH) is the 'HIGH' region element. The short motif at 187 to 192 (ERGGDP) is the 'ERGGDP' region element. Position 227 (Trp227) interacts with L-cysteinyl-5'-AMP. Cys231 lines the Zn(2+) pocket. 249 to 251 (GSD) serves as a coordination point for L-cysteinyl-5'-AMP. His256 lines the Zn(2+) pocket. Residue Ile283 coordinates L-cysteinyl-5'-AMP. Residues 289–293 (KMSKS) carry the 'KMSKS' region motif.

The protein belongs to the class-I aminoacyl-tRNA synthetase family. MshC subfamily. Monomer. Requires Zn(2+) as cofactor.

It catalyses the reaction 1D-myo-inositol 2-amino-2-deoxy-alpha-D-glucopyranoside + L-cysteine + ATP = 1D-myo-inositol 2-(L-cysteinylamino)-2-deoxy-alpha-D-glucopyranoside + AMP + diphosphate + H(+). Its function is as follows. Catalyzes the ATP-dependent condensation of GlcN-Ins and L-cysteine to form L-Cys-GlcN-Ins. The chain is L-cysteine:1D-myo-inositol 2-amino-2-deoxy-alpha-D-glucopyranoside ligase from Nakamurella multipartita (strain ATCC 700099 / DSM 44233 / CIP 104796 / JCM 9543 / NBRC 105858 / Y-104) (Microsphaera multipartita).